The primary structure comprises 467 residues: ATP synthase subunit beta (467 aa).

Residue 156–163 participates in ATP binding; the sequence is GGAGVGKT.

This sequence belongs to the ATPase alpha/beta chains family. In terms of assembly, F-type ATPases have 2 components, CF(1) - the catalytic core - and CF(0) - the membrane proton channel. CF(1) has five subunits: alpha(3), beta(3), gamma(1), delta(1), epsilon(1). CF(0) has three main subunits: a(1), b(2) and c(9-12). The alpha and beta chains form an alternating ring which encloses part of the gamma chain. CF(1) is attached to CF(0) by a central stalk formed by the gamma and epsilon chains, while a peripheral stalk is formed by the delta and b chains.

Its subcellular location is the cell inner membrane. It catalyses the reaction ATP + H2O + 4 H(+)(in) = ADP + phosphate + 5 H(+)(out). Its function is as follows. Produces ATP from ADP in the presence of a proton gradient across the membrane. The catalytic sites are hosted primarily by the beta subunits. The polypeptide is ATP synthase subunit beta (Cupriavidus taiwanensis (strain DSM 17343 / BCRC 17206 / CCUG 44338 / CIP 107171 / LMG 19424 / R1) (Ralstonia taiwanensis (strain LMG 19424))).